The primary structure comprises 181 residues: ATP synthase subunit delta (181 aa).

This sequence belongs to the ATPase delta chain family. F-type ATPases have 2 components, F(1) - the catalytic core - and F(0) - the membrane proton channel. F(1) has five subunits: alpha(3), beta(3), gamma(1), delta(1), epsilon(1). F(0) has three main subunits: a(1), b(2) and c(10-14). The alpha and beta chains form an alternating ring which encloses part of the gamma chain. F(1) is attached to F(0) by a central stalk formed by the gamma and epsilon chains, while a peripheral stalk is formed by the delta and b chains.

Its subcellular location is the cell membrane. Functionally, f(1)F(0) ATP synthase produces ATP from ADP in the presence of a proton or sodium gradient. F-type ATPases consist of two structural domains, F(1) containing the extramembraneous catalytic core and F(0) containing the membrane proton channel, linked together by a central stalk and a peripheral stalk. During catalysis, ATP synthesis in the catalytic domain of F(1) is coupled via a rotary mechanism of the central stalk subunits to proton translocation. In terms of biological role, this protein is part of the stalk that links CF(0) to CF(1). It either transmits conformational changes from CF(0) to CF(1) or is implicated in proton conduction. This is ATP synthase subunit delta from Desulforamulus reducens (strain ATCC BAA-1160 / DSM 100696 / MI-1) (Desulfotomaculum reducens).